The chain runs to 165 residues: Regulatory protein RecX (165 aa).

The protein belongs to the RecX family.

It localises to the cytoplasm. Modulates RecA activity. The sequence is that of Regulatory protein RecX from Cronobacter sakazakii (strain ATCC BAA-894) (Enterobacter sakazakii).